Here is a 547-residue protein sequence, read N- to C-terminus: Chaperonin GroEL (547 aa).

Residues 30–33 (TLGP), lysine 51, 87–91 (DGTTT), glycine 415, and aspartate 496 contribute to the ATP site.

This sequence belongs to the chaperonin (HSP60) family. In terms of assembly, forms a cylinder of 14 subunits composed of two heptameric rings stacked back-to-back. Interacts with the co-chaperonin GroES.

It is found in the cytoplasm. The catalysed reaction is ATP + H2O + a folded polypeptide = ADP + phosphate + an unfolded polypeptide.. Functionally, together with its co-chaperonin GroES, plays an essential role in assisting protein folding. The GroEL-GroES system forms a nano-cage that allows encapsulation of the non-native substrate proteins and provides a physical environment optimized to promote and accelerate protein folding. The protein is Chaperonin GroEL of Haemophilus ducreyi (strain 35000HP / ATCC 700724).